The primary structure comprises 147 residues: Prefoldin subunit alpha (147 aa).

This sequence belongs to the prefoldin alpha subunit family. In terms of assembly, heterohexamer of two alpha and four beta subunits.

It is found in the cytoplasm. In terms of biological role, molecular chaperone capable of stabilizing a range of proteins. Seems to fulfill an ATP-independent, HSP70-like function in archaeal de novo protein folding. This chain is Prefoldin subunit alpha, found in Thermococcus onnurineus (strain NA1).